A 355-amino-acid polypeptide reads, in one-letter code: Undecaprenyl-phosphate alpha-N-acetylglucosaminyl 1-phosphate transferase (355 aa).

Transmembrane regions (helical) follow at residues 1–21, 39–59, 63–83, 123–143, 182–202, 208–228, 237–257, and 315–335; these read MLSI…MRPL, GTIP…YYLM, QLRL…IGIL, FQLT…IAII, WSFA…GIPF, VFMG…ILLL, MNPV…VAII, and WAMF…ITHA.

This sequence belongs to the glycosyltransferase 4 family. WecA subfamily. Mg(2+) is required as a cofactor. Mn(2+) serves as cofactor.

The protein resides in the cell inner membrane. The enzyme catalyses di-trans,octa-cis-undecaprenyl phosphate + UDP-N-acetyl-alpha-D-glucosamine = N-acetyl-alpha-D-glucosaminyl-di-trans,octa-cis-undecaprenyl diphosphate + UMP. It participates in bacterial outer membrane biogenesis; LPS O-antigen biosynthesis. Catalyzes the transfer of the GlcNAc-1-phosphate moiety from UDP-GlcNAc onto the carrier lipid undecaprenyl phosphate (C55-P), yielding GlcNAc-pyrophosphoryl-undecaprenyl (GlcNAc-PP-C55). The protein is Undecaprenyl-phosphate alpha-N-acetylglucosaminyl 1-phosphate transferase of Haemophilus influenzae (strain ATCC 51907 / DSM 11121 / KW20 / Rd).